The sequence spans 131 residues: Fumarate reductase subunit C (131 aa).

The next 3 helical transmembrane spans lie at 30–50 (EGTA…LFAL), 63–83 (FLQN…ALLH), and 109–129 (IIKS…FVAL).

It belongs to the FrdC family. Part of an enzyme complex containing four subunits: a flavoprotein (FrdA), an iron-sulfur protein (FrdB), and two hydrophobic anchor proteins (FrdC and FrdD).

The protein localises to the cell inner membrane. Functionally, two distinct, membrane-bound, FAD-containing enzymes are responsible for the catalysis of fumarate and succinate interconversion; fumarate reductase is used in anaerobic growth, and succinate dehydrogenase is used in aerobic growth. Anchors the catalytic components of the fumarate reductase complex to the cell inner membrane, binds quinones. The sequence is that of Fumarate reductase subunit C from Escherichia coli O17:K52:H18 (strain UMN026 / ExPEC).